The sequence spans 562 residues: MFS-type transporter calB (562 aa).

Residues 1 to 16 (MDEVTRTAQRSPSITE) show a composition bias toward polar residues. A disordered region spans residues 1–45 (MDEVTRTAQRSPSITETHAGETKLAGPGEKEGDVESPVDPSADSE). The helical transmembrane segment at 57-77 (FAILASVTLSAFLMLLDGSII) threads the bilayer. N-linked (GlcNAc...) asparagine glycosylation occurs at asparagine 83. Transmembrane regions (helical) follow at residues 94–113 (IGWY…PLSG), 123–143 (WTYL…GVAN), 154–174 (VAGL…AGAV), 184–204 (GIYL…GGAL), 213–233 (CFYI…FLQV), 256–276 (LIGF…LYYG), 284–304 (SSQV…FALW), 329–349 (INGA…PIYF), 362–382 (VNTL…GVLV), 389–409 (LPFA…VTLF), 418–438 (WIGY…MGII), 451–471 (VGIA…VVVG), and 530–550 (VFYL…GMGW). Asparagine 557 is a glycosylation site (N-linked (GlcNAc...) asparagine).

This sequence belongs to the major facilitator superfamily. TCR/Tet family.

The protein resides in the cell membrane. In terms of biological role, MFS-type transporter; part of the gene cluster that mediates the biosynthesis of calbistrin A and related compounds. Calbistrin A is a secondary metabolite with an interesting structure that was recently found to have bioactivity against leukemia cells. It consists of two polyketides linked by an ester bond: a bicyclic decalin containing polyketide and a linear 12 carbon dioic acid structure. Required for the secretion of calbistrin A and calbistrin C, as well as of related compounds decumbenone A, B and C. The sequence is that of MFS-type transporter calB from Penicillium decumbens.